A 122-amino-acid polypeptide reads, in one-letter code: Antitoxin protein TsiV3 (122 aa).

Residues 1-24 form the signal peptide; it reads MNNLLSAYVTMLLILLSISGGAIA. Intrachain disulfides connect Cys28/Cys41 and Cys82/Cys100.

As to quaternary structure, homodimer; dimerization is critical for inhibitory activity. Forms a heterotetramer with VgrG3 composed of one TsiV3 homodimer and two VgrG3 molecules.

In terms of biological role, immunity protein that plays a role in preventing early activation of toxin VgrG3. This Vibrio cholerae serotype O1 (strain ATCC 39315 / El Tor Inaba N16961) protein is Antitoxin protein TsiV3.